Here is a 70-residue protein sequence, read N- to C-terminus: Cold shock-like protein CspA (70 aa).

Residues 7 to 67 (GSVKWFNETK…GKKGPQAAQV (61 aa)) enclose the CSD domain.

The protein localises to the cytoplasm. The sequence is that of Cold shock-like protein CspA (cspA) from Vibrio cholerae serotype O1 (strain ATCC 39315 / El Tor Inaba N16961).